The sequence spans 480 residues: Phenylalanine--tRNA ligase alpha subunit (480 aa).

L-phenylalanine is bound by residues Thr-324 and Phe-407. Glu-409 lines the Mg(2+) pocket. Residue Phe-432 coordinates L-phenylalanine.

It belongs to the class-II aminoacyl-tRNA synthetase family. Phe-tRNA synthetase alpha subunit type 2 subfamily. As to quaternary structure, tetramer of two alpha and two beta subunits. Requires Mg(2+) as cofactor.

It is found in the cytoplasm. The enzyme catalyses tRNA(Phe) + L-phenylalanine + ATP = L-phenylalanyl-tRNA(Phe) + AMP + diphosphate + H(+). In Methanocaldococcus jannaschii (strain ATCC 43067 / DSM 2661 / JAL-1 / JCM 10045 / NBRC 100440) (Methanococcus jannaschii), this protein is Phenylalanine--tRNA ligase alpha subunit.